The primary structure comprises 500 residues: Probable cytosol aminopeptidase (500 aa).

Mn(2+) is bound by residues lysine 264 and aspartate 269. The active site involves lysine 276. Aspartate 287, aspartate 346, and glutamate 348 together coordinate Mn(2+). The active site involves arginine 350.

Belongs to the peptidase M17 family. The cofactor is Mn(2+).

The protein localises to the cytoplasm. It catalyses the reaction Release of an N-terminal amino acid, Xaa-|-Yaa-, in which Xaa is preferably Leu, but may be other amino acids including Pro although not Arg or Lys, and Yaa may be Pro. Amino acid amides and methyl esters are also readily hydrolyzed, but rates on arylamides are exceedingly low.. The enzyme catalyses Release of an N-terminal amino acid, preferentially leucine, but not glutamic or aspartic acids.. In terms of biological role, presumably involved in the processing and regular turnover of intracellular proteins. Catalyzes the removal of unsubstituted N-terminal amino acids from various peptides. The protein is Probable cytosol aminopeptidase of Rickettsia canadensis (strain McKiel).